The sequence spans 443 residues: Anthocyanidin 3-O-glucoside 5-O-glucosyltransferase 2 (443 aa).

The N-terminal stretch at 1–22 (MVRRRVLLATFPAQGHINPALQ) is a signal peptide. Residue H16 is the Proton acceptor of the active site. Residue H16 coordinates an anthocyanidin. UDP-alpha-D-glucose-binding residues include Q340, H355, W358, N359, S360, E363, D379, and Q380.

This sequence belongs to the UDP-glycosyltransferase family.

The catalysed reaction is an anthocyanidin 3-O-beta-D-glucoside + UDP-alpha-D-glucose = an anthocyanidin 3,5-di-O-beta-D-glucoside + UDP + 2 H(+). It functions in the pathway pigment biosynthesis; anthocyanin biosynthesis. Functionally, catalyzes the glucosylation at the O-5 position of anthocyanidin 3-glucosides to form anthocyanidin 3,5-di-O-glucosides using UDP-glucose as sugar donor. Anthocyanidin 3,5-di-O-glucosides are molecules that are responsible for pigmentation. Also acts on anthocyanidin 3-O-(6-O-malonylglucoside). Much less active with hydroxycinnamoylglucose derivatives. No activity in the absence of the 3-O-glucoside group. The polypeptide is Anthocyanidin 3-O-glucoside 5-O-glucosyltransferase 2 (PF3R6) (Perilla frutescens (Beefsteak mint)).